Reading from the N-terminus, the 260-residue chain is Homeobox-leucine zipper protein HOX25 (260 aa).

Acidic residues predominate over residues M1–G10. Disordered stretches follow at residues M1–R24, A121–A145, and S190–S221. A DNA-binding region (homeobox) is located at residues A19–Q79. The segment at K78–N122 is leucine-zipper. Positions S205–Y218 are enriched in acidic residues.

It belongs to the HD-ZIP homeobox family. Class I subfamily. Expressed in roots, leaf sheaths and blades and panicles.

The protein resides in the nucleus. Its function is as follows. Probable transcription factor. The polypeptide is Homeobox-leucine zipper protein HOX25 (HOX25) (Oryza sativa subsp. indica (Rice)).